We begin with the raw amino-acid sequence, 621 residues long: Na(+)/H(+) antiporter NhaA (621 aa).

Positions 1–430 (MPASSFGESS…LGWLIFKVAA (430 aa)) are na(+)/H(+) antiporter NhaA. The next 11 membrane-spanning stretches (helical) occupy residues 27 to 47 (GAAV…NSPL), 72 to 92 (LHHW…GLEV), 109 to 129 (LALI…VLIV), 139 to 159 (GWGA…AIVG), 168 to 188 (VFLL…IGIV), 192 to 212 (EIRI…WLLG), 223 to 243 (VLIV…ASLA), 300 to 320 (FLRL…NAGV), 339 to 359 (VIAG…LVAV), 375 to 395 (VFGG…IIGL), and 409 to 429 (VGVL…FKVA). The Thioredoxin domain occupies 431–578 (QRWGEKTADL…VERDLASAVA (148 aa)).

The protein in the N-terminal section; belongs to the NhaA Na(+)/H(+) (TC 2.A.33) antiporter family.

The protein resides in the cell inner membrane. It catalyses the reaction Na(+)(in) + 2 H(+)(out) = Na(+)(out) + 2 H(+)(in). Na(+)/H(+) antiporter that extrudes sodium in exchange for external protons. This chain is Na(+)/H(+) antiporter NhaA, found in Herminiimonas arsenicoxydans.